A 314-amino-acid polypeptide reads, in one-letter code: 4-hydroxy-3-methylbut-2-enyl diphosphate reductase (314 aa).

Cysteine 12 serves as a coordination point for [4Fe-4S] cluster. 2 residues coordinate (2E)-4-hydroxy-3-methylbut-2-enyl diphosphate: histidine 41 and histidine 74. Dimethylallyl diphosphate-binding residues include histidine 41 and histidine 74. Isopentenyl diphosphate-binding residues include histidine 41 and histidine 74. Residue cysteine 96 coordinates [4Fe-4S] cluster. Histidine 124 provides a ligand contact to (2E)-4-hydroxy-3-methylbut-2-enyl diphosphate. Histidine 124 is a dimethylallyl diphosphate binding site. Residue histidine 124 coordinates isopentenyl diphosphate. Residue glutamate 126 is the Proton donor of the active site. Threonine 167 serves as a coordination point for (2E)-4-hydroxy-3-methylbut-2-enyl diphosphate. Residue cysteine 197 participates in [4Fe-4S] cluster binding. Residues serine 225, serine 226, asparagine 227, and serine 269 each coordinate (2E)-4-hydroxy-3-methylbut-2-enyl diphosphate. Serine 225, serine 226, asparagine 227, and serine 269 together coordinate dimethylallyl diphosphate. 4 residues coordinate isopentenyl diphosphate: serine 225, serine 226, asparagine 227, and serine 269.

The protein belongs to the IspH family. [4Fe-4S] cluster serves as cofactor.

The catalysed reaction is isopentenyl diphosphate + 2 oxidized [2Fe-2S]-[ferredoxin] + H2O = (2E)-4-hydroxy-3-methylbut-2-enyl diphosphate + 2 reduced [2Fe-2S]-[ferredoxin] + 2 H(+). It carries out the reaction dimethylallyl diphosphate + 2 oxidized [2Fe-2S]-[ferredoxin] + H2O = (2E)-4-hydroxy-3-methylbut-2-enyl diphosphate + 2 reduced [2Fe-2S]-[ferredoxin] + 2 H(+). The protein operates within isoprenoid biosynthesis; dimethylallyl diphosphate biosynthesis; dimethylallyl diphosphate from (2E)-4-hydroxy-3-methylbutenyl diphosphate: step 1/1. Its pathway is isoprenoid biosynthesis; isopentenyl diphosphate biosynthesis via DXP pathway; isopentenyl diphosphate from 1-deoxy-D-xylulose 5-phosphate: step 6/6. Its function is as follows. Catalyzes the conversion of 1-hydroxy-2-methyl-2-(E)-butenyl 4-diphosphate (HMBPP) into a mixture of isopentenyl diphosphate (IPP) and dimethylallyl diphosphate (DMAPP). Acts in the terminal step of the DOXP/MEP pathway for isoprenoid precursor biosynthesis. The chain is 4-hydroxy-3-methylbut-2-enyl diphosphate reductase from Actinobacillus succinogenes (strain ATCC 55618 / DSM 22257 / CCUG 43843 / 130Z).